Reading from the N-terminus, the 446-residue chain is MAAPTLARLVLTHLLVALFGMGSWAAINGIWVELPVVVKDLPEGWSLPSYLSVLVALGNLGLLVVTLWRRLAPGKGERAPIQVVQALSVVGTALLAPLWQHLTVMAGQVHSVAFLALTFVLALACCASNVTYLPFLSRLPPPFLRSFFLGQGLSALLPCVLALGQGVGRLECPPAPANGTPGPPLDFPERFSASAFFGALTALLVISAAAFQGLLLLLPSLVSIPTEGSGTGLRGGAPGVEEEEEEEASPLQEPPSQAAGNTPSPDPAAHRLLSARGACLLGLLATTSALTNGVLPAVQSYSSLPYGRLAYHLAVVLGSASNPLACFLAMGILCRSLAGLGGLSLLGTLFGAYLMALAILSPCPPLVGTSAGMVLVVVLWALCLGVFSYVKVATSSLLHGGGPPALLAAGVAIQVGSLLGAVTMFPPTSIYRVFQSRKDCVDPCEP.

The next 4 helical transmembrane spans lie at 14-34 (LLVA…WVEL), 47-67 (LPSY…VVTL), 79-99 (APIQ…APLW), and 104-124 (VMAG…LALA). A glycan (N-linked (GlcNAc...) asparagine) is linked at Asn129. The next 2 membrane-spanning stretches (helical) occupy residues 147–167 (FFLG…GQGV) and 196–216 (FFGA…GLLL). The interval 228-267 (GSGTGLRGGAPGVEEEEEEEASPLQEPPSQAAGNTPSPDP) is disordered. Positions 229-238 (SGTGLRGGAP) are enriched in gly residues. Residues 254–263 (PPSQAAGNTP) are compositionally biased toward polar residues. 5 consecutive transmembrane segments (helical) span residues 278–298 (ACLL…LPAV), 313–333 (LAVV…MGIL), 340–360 (LGGL…LAIL), 367–387 (VGTS…LGVF), and 405–425 (ALLA…VTMF).

This sequence belongs to the riboflavin transporter family.

It localises to the cell membrane. The catalysed reaction is riboflavin(in) = riboflavin(out). Riboflavin transport is Na(+)-independent but moderately pH-sensitive. Activity is strongly inhibited by riboflavin analogs, such as lumiflavin. Weakly inhibited by flavin adenine dinucleotide (FAD) and flavin mononucleotide (FMN). Plasma membrane transporter mediating the uptake by cells of the water soluble vitamin B2/riboflavin that plays a key role in biochemical oxidation-reduction reactions of the carbohydrate, lipid, and amino acid metabolism. May also act as a receptor for 4-hydroxybutyrate. Functionally, (Microbial infection) In case of infection by porcine endogenous retrovirus (PERV-A), acts as a cell receptor to retroviral envelopes. This is Solute carrier family 52, riboflavin transporter, member 2 (SLC52A2) from Sus scrofa (Pig).